The chain runs to 331 residues: Probable deacetylase MTH_1194 (331 aa).

Residue His-118 is the Proton donor/acceptor of the active site. Zn(2+) contacts are provided by Asp-155, His-157, and Asp-244.

It belongs to the histone deacetylase family. Zn(2+) serves as cofactor.

Its function is as follows. Probable deacetylase. The sequence is that of Probable deacetylase MTH_1194 from Methanothermobacter thermautotrophicus (strain ATCC 29096 / DSM 1053 / JCM 10044 / NBRC 100330 / Delta H) (Methanobacterium thermoautotrophicum).